Consider the following 77-residue polypeptide: EMBRYO SURROUNDING FACTOR 1-like protein 9 (77 aa).

The N-terminal stretch at 1–22 (MSSSRFLILCIILISFFPLHEC) is a signal peptide. Intrachain disulfides connect Cys38–Cys54, Cys43–Cys75, Cys52–Cys71, and Cys55–Cys64.

Belongs to the MEG family. Expressed in flowers.

The sequence is that of EMBRYO SURROUNDING FACTOR 1-like protein 9 (ESFL9) from Arabidopsis thaliana (Mouse-ear cress).